The chain runs to 466 residues: Reticulophagy regulator 3 (466 aa).

Positions 1-28 are disordered; the sequence is MAEAEGVPTTPGPASGSTFRGRRDVSGS. Position 2 is an N-acetylalanine (alanine 2). The Cytoplasmic portion of the chain corresponds to 2-80; that stretch reads AEAEGVPTTP…WCLGLNAAFW (79 aa). Threonine 10 carries the phosphothreonine modification. Serine 26 carries the post-translational modification Phosphoserine. Residues 81–101 traverse the membrane as a helical segment; it reads FFALTSLRLVFLLAFGLMIIV. Over 102-163 the chain is Lumenal; sequence CIDQWKNKIW…FIRNVLLFKK (62 aa). Residues 164–184 form a helical membrane-spanning segment; sequence QNPGKFCLLSCGILTFLAVLG. At 185–186 the chain is on the cytoplasmic side; that stretch reads RY. Residues 187–207 traverse the membrane as a helical segment; it reads VPGLLLSYLMLVTVMMWPLAV. Over 208–381 the chain is Lumenal; that stretch reads YHRLWDRAYV…ASRDEAALPE (174 aa). 2 positions are modified to phosphoserine: serine 258 and serine 260. Threonine 283 carries the phosphothreonine modification. The tract at residues 284–374 is disordered; it reads DSEHSDAEVS…EEPQAPPASR (91 aa). 4 positions are modified to phosphoserine: serine 285, serine 288, serine 293, and serine 303. A compositionally biased stretch (polar residues) spans 294-310; the sequence is CTDNGTFNLSRGQTPLT. Residues threonine 307 and threonine 310 each carry the phosphothreonine modification. Phosphoserine is present on residues serine 313, serine 320, and serine 360. The span at 316–331 shows a compositional bias: basic and acidic residues; sequence LDGHSDPEESFARDLP. The chain crosses the membrane as a helical span at residues 382–402; sequence LLLGALPVGSNLTSNLASLVS. Over 403–466 the chain is Cytoplasmic; the sequence is QGMIQLALSG…QLDPASSRSH (64 aa). The disordered stretch occupies residues 412-466; that stretch reads GASQPGPSGAPAQRATRGFLRSPSSDLDTDAEGDDFELLDQSELSQLDPASSRSH. Residues 438–451 show a composition bias toward acidic residues; the sequence is LDTDAEGDDFELLD. Phosphothreonine is present on threonine 440. The LIR motif signature appears at 445 to 450; sequence DDFELL. Over residues 453–466 the composition is skewed to polar residues; it reads SELSQLDPASSRSH.

The protein belongs to the RETREG family. As to quaternary structure, interacts with ATG8 family modifier proteins MAP1LC3A, MAP1LC3B, MAP1LC3C, GABARAP, GABARAPL1 and GABARAPL2. Interacts with CANX. Interacts with RTN4 isoform B.

The protein resides in the endoplasmic reticulum membrane. Endoplasmic reticulum (ER)-anchored autophagy regulator which exists in an inactive state under basal conditions but is activated following cellular stress. When activated, induces ER fragmentation and mediates ER delivery into lysosomes through sequestration into autophagosomes via interaction with ATG8 family proteins. Promotes ER membrane curvature and ER tubulation required for subsequent ER fragmentation and engulfment into autophagosomes. Required for collagen quality control in a LIR motif-dependent manner. Mediates NRF1-enhanced neurite outgrowth. This chain is Reticulophagy regulator 3, found in Homo sapiens (Human).